The sequence spans 1398 residues: MNQEIMNLFNPTTPAQVFDQIRISIASPEKILSWSYGEIKKPETINYRTFKPERDGLFCARIFGPIKDYECLCGKYKRMKYKGIICEKCSVEVTLSRVRRERMGHIELAAPVAHIWFLKSLPSRIGLLLDMTLKDLERILYFEYYVVLEPGLTALKDRQLLSEDEYLKAQDEYGQDSFTAMIGAEAIRELLKGMDLEKLEASLRVEMQETDSDIKHKKLAKRLKIVEAFRHSGNKPEWMIMTVVPVIPPDLRPLVPLDGGRFATSDLNDLYRRVINRNNRLKRLMELRAPDIIIRNEKRMLQEAVDALFDNGRRGRVITGANKRPLKSLADMLKGKQGRFRQNLLGKRVDYSGRSVIVVGPELRLHQCGLPKKMALELFKPFIYSRLDAKGLSTTVKQAKKLVEKERPEVWDILDEVIREHPVLLNRAPTLHRLGIQAFEPVLIEGKAIQLHPLVCAAFNADFDGDQMAVHVPLSLEAQLEARVLMMSTNNILHPANGQPIIVPSQDIVLGLYYVSIMREGLPGEGKIFGDMAELEHALHAKVIHLHTKIKYRWQGMDETGKVSTRWIETTAGRVMLGNLLPKNPRISYEIINKLMTKREISGVIDQVYRHCGQKETVIFCDRIMALGFYNAFKAGISFGKDDMVVPHGKWKIVDTTRTLAKDFEQQYNDGLITHGEKYNKVVDAWSKATEEIAKAMMKEISATKKTASGADADINSIYMMAHSGARGSPAQMRQLAGMRGLMAKPSGEIIETPIISNFKEGLSVLEYFNSTHGARKGLADTALKTANSGYLTRRLVDVAQDCIITQDDCGTKLGIKMRAIVDAGTVVASLGSRILGRTACEDVRDSSGKVIIKRGTLMEESHLDAIHQGGVQEVKIRSALTCELVNGICGKCYGRDLARGTPVNHGEAVGVIAAQSIGEPGTQLTMRTFHIGGAAQLNEQSFVESNFDGKIVIRNKAIARNSEGHLIAMVRNMVVAIVDADGTERATHRIQYGSRLHVDEGDTVKRGQRIVEWDPYTRPLLTEVEGTIGFEDLVEGQSISETLDEATGIAKRVVIDWRSTRGGSDLRPAIVVKGKDGKVLKLARGGDARYMLSVDAILSVDIGAKVAPGDILARVSTESAKTRDITGGLPRVAELFEARRPKDAAIIAEIAGTIRFGRDYKNKRRISIEPMDKTDEPREYLIPKGKHIHLQDGDVVEKGDFIVEGNPAPHDILAVKGIEELAAYLVNEIQEVYRLQGVLINDKHIEVIVRQMLQKVEVTDQGDTDMISGEQVDKIEFDALNEKAKEEGKKIATGTPVLLGITKASLQTRSFFSAASFQETTRVLTEAAVNGKVDPLEGLKENVIVGRLIPAGTGASMAKIREVAMKRDKLILDEREKQAAVVSPAPEAELPALPPAE.

Zn(2+) contacts are provided by cysteine 71, cysteine 73, cysteine 86, and cysteine 89. Positions 462, 464, and 466 each coordinate Mg(2+). Residues cysteine 810, cysteine 883, cysteine 890, and cysteine 893 each contribute to the Zn(2+) site. The disordered stretch occupies residues 1377–1398 (EKQAAVVSPAPEAELPALPPAE). Residues 1380 to 1392 (AAVVSPAPEAELP) show a composition bias toward low complexity.

It belongs to the RNA polymerase beta' chain family. In terms of assembly, the RNAP catalytic core consists of 2 alpha, 1 beta, 1 beta' and 1 omega subunit. When a sigma factor is associated with the core the holoenzyme is formed, which can initiate transcription. Mg(2+) is required as a cofactor. Requires Zn(2+) as cofactor.

The catalysed reaction is RNA(n) + a ribonucleoside 5'-triphosphate = RNA(n+1) + diphosphate. Its function is as follows. DNA-dependent RNA polymerase catalyzes the transcription of DNA into RNA using the four ribonucleoside triphosphates as substrates. The chain is DNA-directed RNA polymerase subunit beta' from Bradyrhizobium diazoefficiens (strain JCM 10833 / BCRC 13528 / IAM 13628 / NBRC 14792 / USDA 110).